Consider the following 372-residue polypeptide: MTSIEPTHTGKKVIVGMSGGVDSSVSAYLLMQQGYQVEGLFMKNWEEDDNNEYCAAAEDLKDAQAVCDKLGIKLHTVNFAAEYWDNVFEYFLAEYKAGRTPNPDIMCNKEIKFKAFLEFADEILDADYIAMGHYVRRRDNSDGSTQMLRGVDGNKDQSYFLYTLSHEQVARSLFPVGELEKHQVREIAKEMGLITHDKKDSTGICFIGERKFTEFLGTYLPAQPGNIETPEGEVIGTHQGLMYHTLGQRKGLGIGGMKNSNDDPWYVVDKDLERNVLIVGQGGHHPRLMSNGMTVNQLHWVDRTGPVDGCHITVKTRYRQQDVPCTLTYTDEHTLRVVFDEPVAAVTPGQSVVFYDGEVCLGGGIIDQLIRG.

Residues 16–23 (GMSGGVDS) and Met-42 each bind ATP. An interaction with target base in tRNA region spans residues 102–104 (NPD). Cys-107 serves as the catalytic Nucleophile. Cys-107 and Cys-205 are disulfide-bonded. Gly-132 contributes to the ATP binding site. Residues 155 to 157 (KDQ) are interaction with tRNA. Cys-205 (cysteine persulfide intermediate) is an active-site residue. The segment at 317-318 (RY) is interaction with tRNA.

This sequence belongs to the MnmA/TRMU family.

It localises to the cytoplasm. It catalyses the reaction S-sulfanyl-L-cysteinyl-[protein] + uridine(34) in tRNA + AH2 + ATP = 2-thiouridine(34) in tRNA + L-cysteinyl-[protein] + A + AMP + diphosphate + H(+). Catalyzes the 2-thiolation of uridine at the wobble position (U34) of tRNA, leading to the formation of s(2)U34. The polypeptide is tRNA-specific 2-thiouridylase MnmA (Shewanella sp. (strain W3-18-1)).